A 444-amino-acid polypeptide reads, in one-letter code: MRKVKPKLNLTSQTARIVNLSHDGRGIARINGKATFIQGALPGEVVEFQYTRVKKDFDEGKLLSIVEPSTLRVEPKCPHYQMCGGCSLQHMSAEEQIRFKQSHLLDLLSRYGHTAPQTVLSPLTSHPWNYRNKARLSTRFVEKKQSTMVGFRERNNPRFITEINQCPILNSKIDTDIVHLRKLIDTMEDKQCIAQIEVAAGDNEVALIFRNLTPLTEQDESKIRKFAQQFQYKVFLQPGGLDSVFCFYPSDAHAYLSYELPDYQITFQFHPNDFTQVNAELNRKMVKQAIQLMELKNSDIVLDLFCGLGNFSLPMAKHCSRVIGVEGNRNMVERAYMNAKSNHITNVDFYAANLDDVMEVRNLVNTSFSKVLIDPPRSGALEIVKQIDSIDPERIVYVSCNPITLARDTDILVNQKGYVLITAGVMDMFPHTAHVESIALFQKG.

Residues 5 to 64 (KPKLNLTSQTARIVNLSHDGRGIARINGKATFIQGALPGEVVEFQYTRVKKDFDEGKLLS) enclose the TRAM domain. Cysteine 77, cysteine 83, cysteine 86, and cysteine 166 together coordinate [4Fe-4S] cluster. 6 residues coordinate S-adenosyl-L-methionine: glutamine 276, phenylalanine 305, asparagine 310, glutamate 326, asparagine 353, and aspartate 374. The active-site Nucleophile is the cysteine 400.

This sequence belongs to the class I-like SAM-binding methyltransferase superfamily. RNA M5U methyltransferase family. RlmD subfamily.

The enzyme catalyses uridine(1939) in 23S rRNA + S-adenosyl-L-methionine = 5-methyluridine(1939) in 23S rRNA + S-adenosyl-L-homocysteine + H(+). Functionally, catalyzes the formation of 5-methyl-uridine at position 1939 (m5U1939) in 23S rRNA. The sequence is that of 23S rRNA (uracil(1939)-C(5))-methyltransferase RlmD from Legionella pneumophila (strain Lens).